The following is an 88-amino-acid chain: Alpha-latrotoxin associated low molecular weight protein 2 (88 aa).

The signal sequence occupies residues M1–G19. 3 disulfide bridges follow: C30/C66, C46/C62, and C49/C75.

It belongs to the arthropod CHH/MIH/GIH/VIH hormone family. Expressed by the venom gland.

The protein resides in the secreted. May increase the toxicity of alpha-latrotoxin and/or other venom components. Is non-toxic to mice and to the cockroach Periplaneta americana. The chain is Alpha-latrotoxin associated low molecular weight protein 2 from Latrodectus geometricus (Brown widow spider).